The sequence spans 935 residues: UvrABC system protein A (935 aa).

31–38 (GLSGSGKS) contacts ATP. The segment at 254-281 (CFKCKMSFEELEPLSFSFNSPKGACESC) adopts a C4-type zinc-finger fold. ABC transporter domains are found at residues 310 to 579 (IFGY…NNHS) and 599 to 931 (KEKH…KFLA). 631–638 (GVSGSGKS) provides a ligand contact to ATP. A C4-type zinc finger spans residues 731 to 757 (CEKCQGDGDIKIEMHFLPDVLVQCDSC).

This sequence belongs to the ABC transporter superfamily. UvrA family. Forms a heterotetramer with UvrB during the search for lesions.

It localises to the cytoplasm. In terms of biological role, the UvrABC repair system catalyzes the recognition and processing of DNA lesions. UvrA is an ATPase and a DNA-binding protein. A damage recognition complex composed of 2 UvrA and 2 UvrB subunits scans DNA for abnormalities. When the presence of a lesion has been verified by UvrB, the UvrA molecules dissociate. In Helicobacter pylori (strain ATCC 700392 / 26695) (Campylobacter pylori), this protein is UvrABC system protein A.